A 424-amino-acid polypeptide reads, in one-letter code: Vasopressin V1a receptor (424 aa).

The disordered stretch occupies residues 1 to 40 (MSFPRGSQDRSVGNSSPWWPLTTEGSNGSQEAARLGEGDS). Topologically, residues 1–52 (MSFPRGSQDRSVGNSSPWWPLTTEGSNGSQEAARLGEGDSPLGDVRNEELAK) are extracellular. The segment covering 9 to 30 (DRSVGNSSPWWPLTTEGSNGSQ) has biased composition (polar residues). N-linked (GlcNAc...) asparagine glycosylation occurs at N27. Residues 53-76 (LEIAVLAVIFVVAVLGNSSVLLAL) form a helical membrane-spanning segment. The Cytoplasmic portion of the chain corresponds to 77–88 (HRTPRKTSRMHL). Residues 89–110 (FIRHLSLADLAVAFFQVLPQLC) traverse the membrane as a helical segment. Topologically, residues 111–125 (WDITYRFRGPDWLCR) are extracellular. The cysteines at positions 124 and 205 are disulfide-linked. Residues 126-147 (VVKHLQVFAMFASAYMLVVMTA) form a helical membrane-spanning segment. Over 148–168 (DRYIAVCHPLKTLQQPARRSR) the chain is Cytoplasmic. A helical membrane pass occupies residues 169–190 (LMIATSWVLSFILSTPQYFIFS). Topologically, residues 191-220 (VIEIEVNNGTKTQDCWATFIQPWGTRAYVT) are extracellular. Residues 221-241 (WMTSGVFVAPVVVLGTCYGFI) traverse the membrane as a helical segment. At 242–299 (CYHIWRNIRGKTASSRHSKGDKGSGEAVGPFHKGLLVTPCVSSVKSISRAKIRTVKMT) the chain is on the cytoplasmic side. Residues 300–319 (FVIVSAYILCWAPFFIVQMW) form a helical membrane-spanning segment. The Extracellular portion of the chain corresponds to 320–337 (SVWDENFIWTDSENPSIT). A helical membrane pass occupies residues 338 to 357 (ITALLASLNSCCNPWIYMFF). The Cytoplasmic portion of the chain corresponds to 358–424 (SGHLLQDCVQ…KSIRFIPVST (67 aa)). Residues C371 and C372 are each lipidated (S-palmitoyl cysteine). The tract at residues 383–416 (DSDSMSRRQTSYSNNRSPTNSTGMWKDSPKSSKS) is disordered. Over residues 389-405 (RRQTSYSNNRSPTNSTG) the composition is skewed to polar residues. S410 carries the phosphoserine modification.

This sequence belongs to the G-protein coupled receptor 1 family. Vasopressin/oxytocin receptor subfamily. In terms of processing, palmitoylated on three cysteine residues, of which only two are identified. As to expression, localized within gonadotropes of the anterior pituitary of the brain. Broadly distributed throughout the cerebral cortex.

Its subcellular location is the cell membrane. The protein resides in the cytoplasmic vesicle membrane. In terms of biological role, receptor for arginine vasopressin. The activity of this receptor is mediated by G proteins which activate a phosphatidyl-inositol-calcium second messenger system. Involved in social memory formation. The protein is Vasopressin V1a receptor (Avpr1a) of Rattus norvegicus (Rat).